A 443-amino-acid polypeptide reads, in one-letter code: 3-phosphoshikimate 1-carboxyvinyltransferase (443 aa).

The interval 1–25 is disordered; the sequence is MSHSAEPLPMTARRSGPLTGEAQVP. Positions 28, 29, and 33 each coordinate 3-phosphoshikimate. Phosphoenolpyruvate is bound at residue lysine 28. Glycine 101 and arginine 129 together coordinate phosphoenolpyruvate. 4 residues coordinate 3-phosphoshikimate: serine 174, glutamine 176, aspartate 326, and lysine 353. Glutamine 176 serves as a coordination point for phosphoenolpyruvate. The active-site Proton acceptor is the aspartate 326. Phosphoenolpyruvate is bound by residues arginine 357 and arginine 400.

This sequence belongs to the EPSP synthase family. As to quaternary structure, monomer.

The protein resides in the cytoplasm. The catalysed reaction is 3-phosphoshikimate + phosphoenolpyruvate = 5-O-(1-carboxyvinyl)-3-phosphoshikimate + phosphate. It functions in the pathway metabolic intermediate biosynthesis; chorismate biosynthesis; chorismate from D-erythrose 4-phosphate and phosphoenolpyruvate: step 6/7. Functionally, catalyzes the transfer of the enolpyruvyl moiety of phosphoenolpyruvate (PEP) to the 5-hydroxyl of shikimate-3-phosphate (S3P) to produce enolpyruvyl shikimate-3-phosphate and inorganic phosphate. The chain is 3-phosphoshikimate 1-carboxyvinyltransferase from Paracoccus denitrificans (strain Pd 1222).